Reading from the N-terminus, the 443-residue chain is MAKYTKEDIINLVKENGVKFIRLQFTDIFGTLKNVAITDKQLEKALDNECMFDGSSIDGFVRIEESDMNLRPNLDSFVIFPWRPQQGKVARLICDVYKPDGTPFEGDPRHVLKRANADAKELGYTMNVGPECEFFLFETDENGRATTNTQDKAGYFDLAPTDLGENARRDMTLALEEMGFEIEASHHEVAEGQNEIDFKYGDALTTADNIMTFKLVVKSIAQRHGLHASFMPKPIFGINGSGMHVNMSLFKDGKNAFVDENDKNGLSKVAYQFIAGLLKNIKGMAAVTNPLVNSYKRLVPGYEAPVYLAWSCKNRTALIRVPAARGAGTRVELRCPDPSSNPYLVLACLLQAGLDGIKNNLQPPAEVEANIFAMTEQERKENGIDNLPNNLYEAVNYMKENELAKKALGDHVYGNYVAGKAAEWDDYRTKVHDWELENYLNKY.

The 86-residue stretch at 16-101 (NGVKFIRLQF…LICDVYKPDG (86 aa)) folds into the GS beta-grasp domain. The GS catalytic domain occupies 108 to 443 (PRHVLKRANA…WELENYLNKY (336 aa)). The Mg(2+) site is built by E131 and E133. E183 contributes to the ATP binding site. Mg(2+) is bound by residues E188 and E195. L-glutamate-binding positions include 239–240 (NG) and G240. A Mg(2+)-binding site is contributed by H244. S248 is a binding site for ATP. Positions 297, 303, and 315 each coordinate L-glutamate. ATP contacts are provided by R315 and R320. Mg(2+) is bound at residue E332. R334 contributes to the L-glutamate binding site.

This sequence belongs to the glutamine synthetase family. Oligomer of 12 subunits arranged in the form of two hexagons. In its feedback-inhibited form, interacts with TnrA in order to block its DNA-binding activity. The cofactor is Mg(2+).

The protein resides in the cytoplasm. It catalyses the reaction L-glutamate + NH4(+) + ATP = L-glutamine + ADP + phosphate + H(+). With respect to regulation, inhibited by glutamine. Glutamine synthetase (GS) is an unusual multitasking protein that functions as an enzyme, a transcription coregulator, and a chaperone in ammonium assimilation and in the regulation of genes involved in nitrogen metabolism. It catalyzes the ATP-dependent biosynthesis of glutamine from glutamate and ammonia. Feedback-inhibited GlnA also interacts with and regulates the activity of the transcriptional regulator TnrA. During nitrogen limitation, TnrA is in its DNA-binding active state and turns on the transcription of genes required for nitrogen assimilation. Under conditions of nitrogen excess, feedback-inhibited GlnA forms a stable complex with TnrA, which inhibits its DNA-binding activity. In contrast, feedback-inhibited GlnA acts as a chaperone to stabilize the DNA-binding activity of GlnR, which represses the transcription of nitrogen assimilation genes. The sequence is that of Glutamine synthetase from Clostridium saccharobutylicum.